The following is a 349-amino-acid chain: Isopentenyl-diphosphate delta-isomerase (349 aa).

12–13 (RK) is a substrate binding site. FMN contacts are provided by residues S69, 70–72 (SMT), S101, and N129. 101–103 (SQR) contacts substrate. Q164 contributes to the substrate binding site. E165 serves as a coordination point for Mg(2+). Residues K196, T226, 279-281 (GIR), and 300-301 (AA) contribute to the FMN site.

The protein belongs to the IPP isomerase type 2 family. In terms of assembly, homooctamer. Dimer of tetramers. Requires FMN as cofactor. The cofactor is NADPH. It depends on Mg(2+) as a cofactor.

The protein resides in the cytoplasm. The catalysed reaction is isopentenyl diphosphate = dimethylallyl diphosphate. Functionally, involved in the biosynthesis of isoprenoids. Catalyzes the 1,3-allylic rearrangement of the homoallylic substrate isopentenyl (IPP) to its allylic isomer, dimethylallyl diphosphate (DMAPP). This chain is Isopentenyl-diphosphate delta-isomerase, found in Paracoccus zeaxanthinifaciens.